Consider the following 136-residue polypeptide: Small ribosomal subunit protein uS8c (136 aa).

This sequence belongs to the universal ribosomal protein uS8 family. Part of the 30S ribosomal subunit.

The protein resides in the plastid. Its subcellular location is the chloroplast. In terms of biological role, one of the primary rRNA binding proteins, it binds directly to 16S rRNA central domain where it helps coordinate assembly of the platform of the 30S subunit. This is Small ribosomal subunit protein uS8c (rps8) from Agrostis stolonifera (Creeping bentgrass).